The primary structure comprises 311 residues: uncharacterized protein (311 aa).

The next 10 helical transmembrane spans lie at 13-33 (STAV…GFFS), 41-61 (FELV…CWLA), 76-96 (LQTL…FKSF), 103-123 (IAIS…SFFY), 128-148 (NVIS…ISGI), 157-177 (LMGS…FTTL), 192-212 (FLQT…GAFA), 218-238 (NWIM…LLFF), 248-268 (FISI…TVFT), and 272-292 (PDLY…LTLV). 2 EamA domains span residues 24–147 (VIFG…LISG) and 166–292 (VLAA…LTLV).

The protein belongs to the EamA transporter family.

It is found in the cell membrane. This is an uncharacterized protein from Bacillus subtilis (strain 168).